Here is a 607-residue protein sequence, read N- to C-terminus: DNA primase (607 aa).

The CHC2-type zinc-finger motif lies at 39–63; it reads CPFHDDKNPSMSISSSKNIFKCWAC. Positions 267–350 constitute a Toprim domain; the sequence is NQLFIVEGYF…IVEIVQWEHN (84 aa). Residues glutamate 273, aspartate 319, and aspartate 321 each coordinate Mg(2+).

Belongs to the DnaG primase family. Monomer. Interacts with DnaB. Zn(2+) serves as cofactor. The cofactor is Mg(2+).

It carries out the reaction ssDNA + n NTP = ssDNA/pppN(pN)n-1 hybrid + (n-1) diphosphate.. In terms of biological role, RNA polymerase that catalyzes the synthesis of short RNA molecules used as primers for DNA polymerase during DNA replication. This chain is DNA primase, found in Mycoplasma genitalium (strain ATCC 33530 / DSM 19775 / NCTC 10195 / G37) (Mycoplasmoides genitalium).